The primary structure comprises 3195 residues: Large tegument protein deneddylase (3195 aa).

In terms of domain architecture, Peptidase C76 spans 10–242; the sequence is VAAASRSQFD…VEVISAALRA (233 aa). Active-site residues include Cys30, Asp173, and His175. Disordered regions lie at residues 287–374, 2407–2776, 2829–3068, and 3128–3147; these read RGTA…GALA, NPAH…DSNY, AGVG…AALD, and ASDLDDHQSDQPRESLAPLD. Basic residues predominate over residues 338-347; sequence KVKKPNKGKK. Residues 2470 to 2482 show a composition bias toward basic and acidic residues; the sequence is KIERASGKNRKTE. The span at 2491–2503 shows a compositional bias: low complexity; the sequence is AARGRAAAPPTET. Composition is skewed to basic and acidic residues over residues 2504 to 2527 and 2538 to 2562; these read KTTEKRQKCPPRESPLSRDERAPH and RPPRGDSDDDRHKHETPHGVSDKAA. 2 stretches are compositionally biased toward basic residues: residues 2588–2615 and 2636–2648; these read PKTKPRRTSSGLRRKHQASASVHKHRTH and GRQRRSTLGGKKR. 2 stretches are compositionally biased toward basic and acidic residues: residues 2649-2672 and 2687-2696; these read SGTDRTAEFLKKATCVDKLEKFSR and ACDRLGERGN. Positions 2701-2712 are enriched in pro residues; the sequence is PRAPASSPPPPG. The span at 2714–2723 shows a compositional bias: basic and acidic residues; it reads QADHGIDQRE. 2 stretches are compositionally biased toward acidic residues: residues 2748–2768 and 2835–2844; these read DDGDPAEEEDARDVEEGEEDV and WSEEDEDAPA. A compositionally biased stretch (polar residues) spans 2850–2864; it reads STNVEVATHGYTSDD. Over residues 2869–2878 the composition is skewed to basic and acidic residues; sequence DESKRARATR. The span at 2887-2903 shows a compositional bias: low complexity; the sequence is PASPLAPSTPSSLPTPA. Over residues 2959-2981 the composition is skewed to basic and acidic residues; that stretch reads DDARKKQENSSHERKDDGVRWEI. Acidic residues predominate over residues 2982–2994; sequence DLDSDQGDYSDAS. 3 stretches are compositionally biased toward basic and acidic residues: residues 2995 to 3021, 3050 to 3062, and 3131 to 3140; these read DDCKIPDGPRVAPEKDIKNKQLEKSES, SDDKAGNRKDPKL, and LDDHQSDQPR.

Belongs to the herpesviridae large tegument protein family. In terms of assembly, interacts with host CUL1 and CUL4A; these interactions inhibit the E3 ligase activity of cullins. Interacts with inner tegument protein. Interacts with capsid vertex specific component CVC2. Interacts with the major capsid protein/MCP.

It is found in the virion tegument. The protein localises to the host cytoplasm. The protein resides in the host nucleus. The enzyme catalyses Thiol-dependent hydrolysis of ester, thioester, amide, peptide and isopeptide bonds formed by the C-terminal Gly of ubiquitin (a 76-residue protein attached to proteins as an intracellular targeting signal).. Large tegument protein that plays multiple roles in the viral cycle. During viral entry, remains associated with the capsid while most of the tegument is detached and participates in the capsid transport toward the host nucleus. Plays a role in the routing of the capsid at the nuclear pore complex and subsequent uncoating. Within the host nucleus, acts as a deneddylase and promotes the degradation of nuclear CRLs (cullin-RING ubiquitin ligases) and thereby stabilizes nuclear CRL substrates, while cytoplasmic CRLs remain unaffected. These modifications prevent host cell cycle S-phase progression and create a favorable environment allowing efficient viral genome replication. Participates later in the secondary envelopment of capsids. Indeed, plays a linker role for the association of the outer viral tegument to the capsids together with the inner tegument protein. This Amazona oratrix (yellow-headed parrot) protein is Large tegument protein deneddylase (UL36).